Here is a 532-residue protein sequence, read N- to C-terminus: uncharacterized protein (532 aa).

3 disordered regions span residues 26-84 (KALR…TDSE), 97-129 (VFDE…QVGR), and 157-470 (SKAA…HTCQ). Residues 30 to 40 (GNNNGSSTSGG) are compositionally biased toward low complexity. The segment covering 67-80 (DIISQARRQVSLSR) has biased composition (polar residues). Over residues 157 to 181 (SKAAGEESKRHAHFESIQEEEKISE) the composition is skewed to basic and acidic residues. The segment covering 198 to 213 (IQSGSESSDSDSIIFD) has biased composition (low complexity). A compositionally biased stretch (basic and acidic residues) spans 237–249 (VEKKIEKPAVKEQ). 3 stretches are compositionally biased toward low complexity: residues 259–290 (PTPT…SASE), 298–315 (ESQV…SSSK), and 326–335 (SSSSSASTIS). The span at 347 to 356 (KTKKPDKKRA) shows a compositional bias: basic residues. 4 stretches are compositionally biased toward basic and acidic residues: residues 357 to 368 (KPDDIRQNKKPE), 389 to 403 (STVR…ESLK), 410 to 419 (KSSEKMEKPR), and 437 to 448 (RDAEREQDIERR). Over residues 449–461 (REKRARRFRSRRR) the composition is skewed to basic residues.

This is an uncharacterized protein from Caenorhabditis elegans.